Consider the following 868-residue polypeptide: Leucine--tRNA ligase (868 aa).

The 'HIGH' region motif lies at 42-52 (PYPSGKLHMGH). The 'KMSKS' region motif lies at 627-631 (KMSKS). K630 provides a ligand contact to ATP.

This sequence belongs to the class-I aminoacyl-tRNA synthetase family.

The protein resides in the cytoplasm. The catalysed reaction is tRNA(Leu) + L-leucine + ATP = L-leucyl-tRNA(Leu) + AMP + diphosphate. The protein is Leucine--tRNA ligase of Pseudomonas syringae pv. tomato (strain ATCC BAA-871 / DC3000).